A 492-amino-acid polypeptide reads, in one-letter code: Endoglycoceramidase I (492 aa).

The N-terminal stretch at 1–14 is a signal peptide; sequence MRKTVVAFAAAIAA. The N-palmitoyl cysteine moiety is linked to residue C15. The S-diacylglycerol cysteine moiety is linked to residue C15. Residues K61, D62, 131 to 133, and 213 to 214 contribute to the substrate site; these read HQD and NE. E214 serves as the catalytic Proton donor. The cysteines at positions 224 and 229 are disulfide-linked. The substrate site is built by N265, Q298, and Y302. A disulfide bridge connects residues C294 and C313. Catalysis depends on E339, which acts as the Nucleophile. W365 provides a ligand contact to substrate. The segment at 467–492 is disordered; sequence NRPGSAGAEVPDGPIETSSSGSSGSS.

It belongs to the glycosyl hydrolase 5 (cellulase A) family.

It is found in the secreted. Its subcellular location is the membrane. The enzyme catalyses an oligoglycosyl-(1-&gt;4)-beta-D-glucosyl-(1&lt;-&gt;1)-ceramide + H2O = an oligoglycosyl-(1-&gt;4)-D-glucose + an N-acyl-sphingoid base. The catalysed reaction is a ganglioside GM3 + H2O = N-acetyl-alpha-neuraminosyl-(2-&gt;3)-beta-D-galactosyl-(1-&gt;4)-D-glucose + an N-acyl-sphingoid base. It carries out the reaction a ganglioside GM1 + H2O = beta-D-Gal-(1-&gt;3)-beta-D-GalNAc-(1-&gt;4)-[alpha-Neu5Ac-(2-&gt;3)]-beta-D-Gal-(1-&gt;4)-D-Glc + an N-acyl-sphingoid base. It catalyses the reaction a ganglioside Fuc-GM1 + H2O = alpha-Fuc-(1-&gt;2)-beta-Gal-(1-&gt;3)-beta-GalNAc-(1-&gt;4)-[alpha-Neu5Ac-(2-&gt;3)]-beta-Gal-(1-&gt;4)-Glc + an N-acyl-sphingoid base. The enzyme catalyses a beta-D-galactosyl-(1-&gt;4)-beta-D-glucosyl-(1&lt;-&gt;1)-ceramide + H2O = lactose + an N-acyl-sphingoid base. Its function is as follows. Hydrolyzes glycosphingolipids; exhibits broad substrate specificity including monosialodihexosylganglioside (GM3), monosialotetrahexosylganglioside (GM1), fucosyl-GM1, lactosylceramide, globotriosylceramide, globotetraosylceramide, ganglioside GD1a, and ganglioside GD1b. No activity towards glucosylceramide and galactosylceramide. This Rhodococcus hoagii (strain 103S) (Rhodococcus equi) protein is Endoglycoceramidase I.